The following is a 481-amino-acid chain: UDP-N-acetylmuramoyl-L-alanyl-D-glutamate--L-lysine ligase (481 aa).

A UDP-N-acetyl-alpha-D-muramoyl-L-alanyl-D-glutamate-binding site is contributed by Ser-42. Residue Gly-118–Thr-124 coordinates ATP. UDP-N-acetyl-alpha-D-muramoyl-L-alanyl-D-glutamate is bound by residues Gln-158, Thr-160–Thr-161, Ser-187, and Arg-195. Lys-229 carries the post-translational modification N6-carboxylysine. The L-lysine recognition motif signature appears at Asp-404–Asn-407.

The protein belongs to the MurCDEF family. MurE subfamily. Post-translationally, carboxylation is probably crucial for Mg(2+) binding and, consequently, for the gamma-phosphate positioning of ATP.

The protein localises to the cytoplasm. The catalysed reaction is UDP-N-acetyl-alpha-D-muramoyl-L-alanyl-D-glutamate + L-lysine + ATP = UDP-N-acetyl-alpha-D-muramoyl-L-alanyl-gamma-D-glutamyl-L-lysine + ADP + phosphate + H(+). It participates in cell wall biogenesis; peptidoglycan biosynthesis. Functionally, catalyzes the addition of L-lysine to the nucleotide precursor UDP-N-acetylmuramoyl-L-alanyl-D-glutamate (UMAG) in the biosynthesis of bacterial cell-wall peptidoglycan. The polypeptide is UDP-N-acetylmuramoyl-L-alanyl-D-glutamate--L-lysine ligase (Streptococcus pyogenes serotype M4 (strain MGAS10750)).